Consider the following 100-residue polypeptide: Small ribosomal subunit protein uS14c (100 aa).

It belongs to the universal ribosomal protein uS14 family. As to quaternary structure, part of the 30S ribosomal subunit.

The protein resides in the plastid. It localises to the chloroplast. Functionally, binds 16S rRNA, required for the assembly of 30S particles. This Barbarea verna (Land cress) protein is Small ribosomal subunit protein uS14c.